Here is a 95-residue protein sequence, read N- to C-terminus: Trypomastigote decay-accelerating factor (95 aa).

The protein belongs to the receptors of complement activation (RCA) family.

Functionally, interferes with the efficient assembly of the host C3 convertase. Could protect parasites from complement-mediated lysis by sera from a number of different species. This is Trypomastigote decay-accelerating factor from Trypanosoma cruzi.